A 400-amino-acid chain; its full sequence is NADH-quinone oxidoreductase subunit D (400 aa).

It belongs to the complex I 49 kDa subunit family. In terms of assembly, NDH-1 is composed of 14 different subunits. Subunits NuoB, C, D, E, F, and G constitute the peripheral sector of the complex.

The protein localises to the cell inner membrane. It catalyses the reaction a quinone + NADH + 5 H(+)(in) = a quinol + NAD(+) + 4 H(+)(out). Functionally, NDH-1 shuttles electrons from NADH, via FMN and iron-sulfur (Fe-S) centers, to quinones in the respiratory chain. The immediate electron acceptor for the enzyme in this species is believed to be a menaquinone. Couples the redox reaction to proton translocation (for every two electrons transferred, four hydrogen ions are translocated across the cytoplasmic membrane), and thus conserves the redox energy in a proton gradient. This Pelodictyon phaeoclathratiforme (strain DSM 5477 / BU-1) protein is NADH-quinone oxidoreductase subunit D.